We begin with the raw amino-acid sequence, 129 residues long: Small ribosomal subunit protein uS9 (129 aa).

The interval 98–129 (KAQGFLTRDPRKKERKKYGRKKARKSFQFSKR) is disordered. A compositionally biased stretch (basic residues) spans 110–129 (KERKKYGRKKARKSFQFSKR).

This sequence belongs to the universal ribosomal protein uS9 family.

The sequence is that of Small ribosomal subunit protein uS9 from Chlamydia trachomatis serovar L2 (strain ATCC VR-902B / DSM 19102 / 434/Bu).